A 936-amino-acid polypeptide reads, in one-letter code: Isoleucine--tRNA ligase (936 aa).

A 'HIGH' region motif is present at residues 58 to 68; sequence PYANGRAHLGT. Glutamate 561 is an L-isoleucyl-5'-AMP binding site. A 'KMSKS' region motif is present at residues 602–606; sequence KMSKS. Lysine 605 lines the ATP pocket. Residues cysteine 899, cysteine 902, cysteine 919, and cysteine 922 each coordinate Zn(2+).

The protein belongs to the class-I aminoacyl-tRNA synthetase family. IleS type 1 subfamily. Monomer. It depends on Zn(2+) as a cofactor.

It localises to the cytoplasm. It catalyses the reaction tRNA(Ile) + L-isoleucine + ATP = L-isoleucyl-tRNA(Ile) + AMP + diphosphate. Its function is as follows. Catalyzes the attachment of isoleucine to tRNA(Ile). As IleRS can inadvertently accommodate and process structurally similar amino acids such as valine, to avoid such errors it has two additional distinct tRNA(Ile)-dependent editing activities. One activity is designated as 'pretransfer' editing and involves the hydrolysis of activated Val-AMP. The other activity is designated 'posttransfer' editing and involves deacylation of mischarged Val-tRNA(Ile). The polypeptide is Isoleucine--tRNA ligase (Coxiella burnetii (strain RSA 331 / Henzerling II)).